Consider the following 171-residue polypeptide: Lipoprotein signal peptidase (171 aa).

Helical transmembrane passes span 15–35, 47–67, 72–92, and 107–127; these read WLWL…IVMD, VLPF…SFLS, WQRW…AYWM, and ALII…GFVV. Active-site residues include Asp-128 and Asp-146. A helical membrane pass occupies residues 141-161; sequence AFNLADSTICIGAAMIILDGF.

Belongs to the peptidase A8 family.

Its subcellular location is the cell inner membrane. It carries out the reaction Release of signal peptides from bacterial membrane prolipoproteins. Hydrolyzes -Xaa-Yaa-Zaa-|-(S,diacylglyceryl)Cys-, in which Xaa is hydrophobic (preferably Leu), and Yaa (Ala or Ser) and Zaa (Gly or Ala) have small, neutral side chains.. It functions in the pathway protein modification; lipoprotein biosynthesis (signal peptide cleavage). In terms of biological role, this protein specifically catalyzes the removal of signal peptides from prolipoproteins. This chain is Lipoprotein signal peptidase, found in Vibrio cholerae serotype O1 (strain ATCC 39315 / El Tor Inaba N16961).